The primary structure comprises 195 residues: Ras-related protein rac-2 (195 aa).

Residue Gly-10–Thr-17 participates in GTP binding. The Effector region motif lies at Tyr-32–Tyr-40. GTP contacts are provided by residues Asp-57–Gln-61 and Thr-115–Asp-118. The tract at residues Gly-176–Leu-195 is disordered. Cys-192 carries the post-translational modification Cysteine methyl ester. Cys-192 carries the S-geranylgeranyl cysteine lipid modification. Positions Thr-193–Leu-195 are cleaved as a propeptide — removed in mature form.

It belongs to the small GTPase superfamily. Rho family.

Its subcellular location is the cell membrane. Its function is as follows. During gonad morphogenesis, plays a role in distal tip cell (DTC)-mediated guidance of gonad elongation. The sequence is that of Ras-related protein rac-2 (rac-2) from Caenorhabditis elegans.